Consider the following 258-residue polypeptide: uncharacterized protein (258 aa).

The N-terminal stretch at 1–19 (MVGILPLCCSGCVPSLCCS) is a signal peptide. Helical transmembrane passes span 94–114 (GLLL…NWTG), 197–217 (CLIL…LPYI), and 219–239 (PGLS…SSLV).

It is found in the membrane. This is an uncharacterized protein from Homo sapiens (Human).